The sequence spans 84 residues: Beta-mammal/insect toxin Ts1 (84 aa).

The first 20 residues, 1 to 20 (MKGMILFISCLLLIGIVVEC), serve as a signal peptide directing secretion. The 62-residue stretch at 21-82 (KEGYLMDHEG…VWDRATNKCG (62 aa)) folds into the LCN-type CS-alpha/beta domain. Intrachain disulfides connect Cys31–Cys81, Cys35–Cys57, Cys43–Cys62, and Cys47–Cys64. Cys81 is subject to Cysteine amide.

It belongs to the long (4 C-C) scorpion toxin superfamily. Sodium channel inhibitor family. In terms of processing, C-terminal amidation is important for high activity. As to expression, expressed by the venom gland.

Its subcellular location is the secreted. Voltage-gated sodium channels (Nav) gating-modifier. Acts both as alpha- and beta-toxin, since it affects not only activation but also inactivation of Nav channels. Binds to Nav domain DII and impairs the four Nav channel voltage sensors movements. Depending on Nav channel subtypes tested, can also bind Nav domains DIII (low affinity) and DIV (very low affinity). Acts on almost all the Nav channels tested (mammalian Nav1.2/SCN2A, Nav1.3/SCN3A, Nav1.4/SCN4A, Nav1.5/SCN5A, Nav1.6/SCN8A, Nav1.9/SCN11A, and insect DmNav1). Is highly active against both mammals and insects. Irreversibly modulates DmNav channels. Other Ts1 activities have been studied, such as immunomodulation, antimicrobial activity or exocrine secretion. This toxin exhibits an antifungal activity against filamentous fungi. In vitro, it has an important immunomodulatory effect on macrophages by stimulating the release of pro-inflammatory cytokines. It also shows an activity in exocrine secretion in pancreas, stomach and adrenal gland. This Tityus serrulatus (Brazilian scorpion) protein is Beta-mammal/insect toxin Ts1.